The primary structure comprises 349 residues: Serine/threonine-protein kinase SRK2A (349 aa).

The 257-residue stretch at 12-268 (YELVKDIGSG…IQEIKNHEWF (257 aa)) folds into the Protein kinase domain. ATP contacts are provided by residues 18–26 (IGSGNFGVA) and Lys41. Asp131 functions as the Proton acceptor in the catalytic mechanism. The activation loop stretch occupies residues 151 to 177 (DFGYSKSSLLHSQPKSTVGTPAYIAPE).

Belongs to the protein kinase superfamily. Ser/Thr protein kinase family.

It catalyses the reaction L-seryl-[protein] + ATP = O-phospho-L-seryl-[protein] + ADP + H(+). The enzyme catalyses L-threonyl-[protein] + ATP = O-phospho-L-threonyl-[protein] + ADP + H(+). With respect to regulation, activated by osmotic stress and by abscisic acid (ABA). Activation by NaCl is dependent on ABA. Involved in early responses to osmotic stress. The protein is Serine/threonine-protein kinase SRK2A of Physcomitrium patens (Spreading-leaved earth moss).